We begin with the raw amino-acid sequence, 239 residues long: Sugar fermentation stimulation protein homolog (239 aa).

This sequence belongs to the SfsA family.

In Caulobacter vibrioides (strain ATCC 19089 / CIP 103742 / CB 15) (Caulobacter crescentus), this protein is Sugar fermentation stimulation protein homolog.